The primary structure comprises 212 residues: Thiamine-phosphate synthase (212 aa).

4-amino-2-methyl-5-(diphosphooxymethyl)pyrimidine-binding positions include 39–43 (QLREK) and N71. 2 residues coordinate Mg(2+): D72 and D91. Residue S110 participates in 4-amino-2-methyl-5-(diphosphooxymethyl)pyrimidine binding. 137-139 (TPT) is a 2-[(2R,5Z)-2-carboxy-4-methylthiazol-5(2H)-ylidene]ethyl phosphate binding site. Position 140 (K140) interacts with 4-amino-2-methyl-5-(diphosphooxymethyl)pyrimidine. G168 lines the 2-[(2R,5Z)-2-carboxy-4-methylthiazol-5(2H)-ylidene]ethyl phosphate pocket.

This sequence belongs to the thiamine-phosphate synthase family. It depends on Mg(2+) as a cofactor.

It carries out the reaction 2-[(2R,5Z)-2-carboxy-4-methylthiazol-5(2H)-ylidene]ethyl phosphate + 4-amino-2-methyl-5-(diphosphooxymethyl)pyrimidine + 2 H(+) = thiamine phosphate + CO2 + diphosphate. The catalysed reaction is 2-(2-carboxy-4-methylthiazol-5-yl)ethyl phosphate + 4-amino-2-methyl-5-(diphosphooxymethyl)pyrimidine + 2 H(+) = thiamine phosphate + CO2 + diphosphate. It catalyses the reaction 4-methyl-5-(2-phosphooxyethyl)-thiazole + 4-amino-2-methyl-5-(diphosphooxymethyl)pyrimidine + H(+) = thiamine phosphate + diphosphate. The protein operates within cofactor biosynthesis; thiamine diphosphate biosynthesis; thiamine phosphate from 4-amino-2-methyl-5-diphosphomethylpyrimidine and 4-methyl-5-(2-phosphoethyl)-thiazole: step 1/1. In terms of biological role, condenses 4-methyl-5-(beta-hydroxyethyl)thiazole monophosphate (THZ-P) and 2-methyl-4-amino-5-hydroxymethyl pyrimidine pyrophosphate (HMP-PP) to form thiamine monophosphate (TMP). The chain is Thiamine-phosphate synthase from Acidothermus cellulolyticus (strain ATCC 43068 / DSM 8971 / 11B).